The sequence spans 501 residues: Cobyric acid synthase (501 aa).

In terms of domain architecture, GATase cobBQ-type spans 253 to 450 (EIEIAVLKLP…LHGIFENGRW (198 aa)). C334 functions as the Nucleophile in the catalytic mechanism. H442 is a catalytic residue.

Belongs to the CobB/CobQ family. CobQ subfamily.

The protein operates within cofactor biosynthesis; adenosylcobalamin biosynthesis. Catalyzes amidations at positions B, D, E, and G on adenosylcobyrinic A,C-diamide. NH(2) groups are provided by glutamine, and one molecule of ATP is hydrogenolyzed for each amidation. In Prochlorococcus marinus (strain MIT 9313), this protein is Cobyric acid synthase.